The following is a 393-amino-acid chain: Beta-1,4-galactosyltransferase 3 (393 aa).

The Cytoplasmic portion of the chain corresponds to M1 to C10. Residues T11–F31 form a helical; Signal-anchor for type II membrane protein membrane-spanning segment. The Lumenal portion of the chain corresponds to R32 to H393. N57 carries an N-linked (GlcNAc...) asparagine glycan. C77 and C119 form a disulfide bridge. P130–R134 is a binding site for UDP-alpha-D-galactose. N166 carries N-linked (GlcNAc...) asparagine glycosylation. UDP-alpha-D-galactose is bound by residues F169 to R171, V196 to D197, Y226, and W258. A disulfide bond links C190 and C209. D197 provides a ligand contact to Mn(2+). Position 260-263 (G260–D263) interacts with N-acetyl-D-glucosamine. H291 provides a ligand contact to Mn(2+). H291–G293 contributes to the UDP-alpha-D-galactose binding site. N-acetyl-D-glucosamine is bound at residue R303. N337 and N385 each carry an N-linked (GlcNAc...) asparagine glycan. The disordered stretch occupies residues T339–H393.

Belongs to the glycosyltransferase 7 family. Mn(2+) serves as cofactor.

The protein localises to the golgi apparatus. It localises to the golgi stack membrane. The enzyme catalyses an N-acetyl-beta-D-glucosaminyl derivative + UDP-alpha-D-galactose = a beta-D-galactosyl-(1-&gt;4)-N-acetyl-beta-D-glucosaminyl derivative + UDP + H(+). The catalysed reaction is N-acetyl-D-glucosamine + UDP-alpha-D-galactose = beta-D-galactosyl-(1-&gt;4)-N-acetyl-D-glucosamine + UDP + H(+). It carries out the reaction a beta-D-GlcNAc-(1-&gt;3)-beta-D-Gal-(1-&gt;4)-beta-D-Glc-(1&lt;-&gt;1)-Cer(d18:1(4E)) + UDP-alpha-D-galactose = a neolactoside nLc4Cer(d18:1(4E)) + UDP + H(+). It catalyses the reaction a beta-D-glucosylceramide + UDP-alpha-D-galactose = a beta-D-galactosyl-(1-&gt;4)-beta-D-glucosyl-(1&lt;-&gt;1)-ceramide + UDP + H(+). The enzyme catalyses a neolactoside IV(3)-beta-GlcNAc-nLc4Cer + UDP-alpha-D-galactose = a neolactoside nLc6Cer + UDP + H(+). Its pathway is protein modification; protein glycosylation. Functionally, responsible for the synthesis of complex-type N-linked oligosaccharides in many glycoproteins as well as the carbohydrate moieties of glycolipids. This chain is Beta-1,4-galactosyltransferase 3 (B4GALT3), found in Pongo abelii (Sumatran orangutan).